A 207-amino-acid polypeptide reads, in one-letter code: MKTKILSLANEEVGEISLNEDIFAVEFIRDDIIKQVIDWQRAKAMSGNHKTKTVSEVLGTTKKPFKQKGTGNARQGSLRSVQMRGGGVAHGPRVRSHATKLPKKVRKLGLIHALSEKCAEGKLLVIDSLKLDKPKTSALVNILNKFQGKSFFVIDGNEVDINFSLAAKNIYNTVVVPQIGANVYDIIRHEYVLLSQEAVSVLEERLR.

This sequence belongs to the universal ribosomal protein uL4 family. Part of the 50S ribosomal subunit.

Functionally, one of the primary rRNA binding proteins, this protein initially binds near the 5'-end of the 23S rRNA. It is important during the early stages of 50S assembly. It makes multiple contacts with different domains of the 23S rRNA in the assembled 50S subunit and ribosome. Its function is as follows. Forms part of the polypeptide exit tunnel. In Rickettsia rickettsii (strain Iowa), this protein is Large ribosomal subunit protein uL4.